Here is a 212-residue protein sequence, read N- to C-terminus: ATP-dependent dethiobiotin synthetase BioD (212 aa).

Position 13 to 18 (13 to 18 (GIGKTV)) interacts with ATP. Position 17 (Thr17) interacts with Mg(2+). Residue Lys33 is part of the active site. Position 37 (Ser37) interacts with substrate. A Mg(2+)-binding site is contributed by Glu100. ATP is bound by residues 100–103 (EGAG) and 184–186 (PRL).

Belongs to the dethiobiotin synthetase family. As to quaternary structure, homodimer. Mg(2+) serves as cofactor.

It localises to the cytoplasm. The enzyme catalyses (7R,8S)-7,8-diammoniononanoate + CO2 + ATP = (4R,5S)-dethiobiotin + ADP + phosphate + 3 H(+). It functions in the pathway cofactor biosynthesis; biotin biosynthesis; biotin from 7,8-diaminononanoate: step 1/2. Its function is as follows. Catalyzes a mechanistically unusual reaction, the ATP-dependent insertion of CO2 between the N7 and N8 nitrogen atoms of 7,8-diaminopelargonic acid (DAPA, also called 7,8-diammoniononanoate) to form a ureido ring. This is ATP-dependent dethiobiotin synthetase BioD from Rhodopseudomonas palustris (strain TIE-1).